We begin with the raw amino-acid sequence, 409 residues long: tRNA (guanine-N(7)-)-methyltransferase non-catalytic subunit wuho (409 aa).

The disordered stretch occupies residues 48-72 (DADSDSDEESTQQPQKPPTNGNGTA). Residues 58 to 72 (TQQPQKPPTNGNGTA) are compositionally biased toward polar residues. WD repeat units follow at residues 72–111 (ADNV…DETN), 122–161 (MVSR…CKKP), 167–206 (GHMS…SIET), and 210–252 (GHGE…EVAR).

The protein belongs to the WD repeat TRM82 family. Forms a heterodimer with the catalytic subunit.

It localises to the nucleus. Its pathway is tRNA modification; N(7)-methylguanine-tRNA biosynthesis. Its function is as follows. Required for the formation of N(7)-methylguanine at position 46 (m7G46) in tRNA. In the complex, it is required to stabilize and induce conformational changes of the catalytic subunit. This chain is tRNA (guanine-N(7)-)-methyltransferase non-catalytic subunit wuho, found in Aedes aegypti (Yellowfever mosquito).